A 438-amino-acid chain; its full sequence is Glutamyl-tRNA reductase (438 aa).

Residues 49–52, serine 109, 114–116, and glutamine 120 contribute to the substrate site; these read TCNR and EQQ. The active-site Nucleophile is cysteine 50. 191–196 contacts NADP(+); that stretch reads GAGAMA.

The protein belongs to the glutamyl-tRNA reductase family. Homodimer.

It catalyses the reaction (S)-4-amino-5-oxopentanoate + tRNA(Glu) + NADP(+) = L-glutamyl-tRNA(Glu) + NADPH + H(+). It participates in porphyrin-containing compound metabolism; protoporphyrin-IX biosynthesis; 5-aminolevulinate from L-glutamyl-tRNA(Glu): step 1/2. Functionally, catalyzes the NADPH-dependent reduction of glutamyl-tRNA(Glu) to glutamate 1-semialdehyde (GSA). The protein is Glutamyl-tRNA reductase of Corynebacterium diphtheriae (strain ATCC 700971 / NCTC 13129 / Biotype gravis).